Reading from the N-terminus, the 231-residue chain is Platelet-activating factor acetylhydrolase IB subunit alpha1 (231 aa).

The residue at position 2 (S2) is an N-acetylserine. S2 bears the Phosphoserine mark. Residues S47, D192, and H195 contribute to the active site.

Belongs to the 'GDSL' lipolytic enzyme family. Platelet-activating factor acetylhydrolase IB beta/gamma subunits subfamily. Forms a catalytic dimer which is either homodimer (alpha1/alpha1 homodimer) or heterodimer with PAFAH1B2 (alpha1/alpha2 heterodimer). Component of the cytosolic (PAF-AH (I)) heterotetrameric enzyme, which is composed of PAFAH1B1 (beta), PAFAH1B2 (alpha2) and PAFAH1B3 (alpha1) subunits. The catalytic activity of the enzyme resides in the alpha1 (PAFAH1B3) and alpha2 (PAFAH1B2) subunits, whereas the beta subunit (PAFAH1B1) has regulatory activity. Trimer formation is not essential for the catalytic activity. Interacts with VLDLR; this interaction may modulate the Reelin pathway. As to expression, in the adult, expressed in brain, skeletal muscle, kidney, thymus, spleen, colon, testis, ovary and peripheral blood leukocytes. In the fetus, highest expression occurs in brain.

Its subcellular location is the cytoplasm. The enzyme catalyses a 1-O-alkyl-2-acetyl-sn-glycero-3-phosphocholine + H2O = a 1-O-alkyl-sn-glycero-3-phosphocholine + acetate + H(+). The catalysed reaction is 1-O-hexadecyl-2-acetyl-sn-glycero-3-phosphocholine + H2O = 1-O-hexadecyl-sn-glycero-3-phosphocholine + acetate + H(+). It catalyses the reaction 1-O-hexadecyl-2-acetyl-sn-glycero-3-phosphate + H2O = 1-O-hexadecyl-sn-glycero-3-phosphate + acetate + H(+). With respect to regulation, beta subunit (PAFAH1B1) inhibits the acetylhydrolase activity of the alpha1/alpha1 catalytic homodimer. In terms of biological role, alpha1 catalytic subunit of the cytosolic type I platelet-activating factor (PAF) acetylhydrolase (PAF-AH (I)) heterotetrameric enzyme that catalyzes the hydrolyze of the acetyl group at the sn-2 position of PAF and its analogs and modulates the action of PAF. The activity and substrate specificity of PAF-AH (I) are affected by its subunit composition. Both alpha1/alpha1 homodimer (PAFAH1B3/PAFAH1B3 homodimer) and alpha1/alpha2 heterodimer(PAFAH1B3/PAFAH1B2 heterodimer) hydrolyze 1-O-alkyl-2-acetyl-sn-glycero-3-phosphoric acid (AAGPA) more efficiently than PAF, but they have little hydrolytic activity towards 1-O-alkyl-2-acetyl-sn-glycero-3-phosphorylethanolamine (AAGPE). Plays an important role during the development of brain. The sequence is that of Platelet-activating factor acetylhydrolase IB subunit alpha1 from Homo sapiens (Human).